Consider the following 644-residue polypeptide: Threonine--tRNA ligase (644 aa).

Positions 1-61 (MNVTIEGQVF…ADTTTIEPVF (61 aa)) constitute a TGS domain. The segment at 241–532 (DHRKLGQQLD…LTEHFAGAFP (292 aa)) is catalytic. Cysteine 333, histidine 384, and histidine 509 together coordinate Zn(2+).

It belongs to the class-II aminoacyl-tRNA synthetase family. As to quaternary structure, homodimer. Zn(2+) is required as a cofactor.

Its subcellular location is the cytoplasm. It carries out the reaction tRNA(Thr) + L-threonine + ATP = L-threonyl-tRNA(Thr) + AMP + diphosphate + H(+). Functionally, catalyzes the attachment of threonine to tRNA(Thr) in a two-step reaction: L-threonine is first activated by ATP to form Thr-AMP and then transferred to the acceptor end of tRNA(Thr). Also edits incorrectly charged L-seryl-tRNA(Thr). This chain is Threonine--tRNA ligase, found in Nitratidesulfovibrio vulgaris (strain DSM 19637 / Miyazaki F) (Desulfovibrio vulgaris).